Consider the following 338-residue polypeptide: 1-aminocyclopropane-1-carboxylate deaminase (338 aa).

The residue at position 51 (Lys-51) is an N6-(pyridoxal phosphate)lysine. The active-site Nucleophile is the Ser-78.

Belongs to the ACC deaminase/D-cysteine desulfhydrase family. As to quaternary structure, homotrimer. Pyridoxal 5'-phosphate serves as cofactor.

The enzyme catalyses 1-aminocyclopropane-1-carboxylate + H2O = 2-oxobutanoate + NH4(+). Functionally, catalyzes a cyclopropane ring-opening reaction, the irreversible conversion of 1-aminocyclopropane-1-carboxylate (ACC) to ammonia and alpha-ketobutyrate. Allows growth on ACC as a nitrogen source. The sequence is that of 1-aminocyclopropane-1-carboxylate deaminase from Burkholderia ambifaria (strain MC40-6).